The primary structure comprises 222 residues: Small ribosomal subunit protein uS2 (222 aa).

The protein belongs to the universal ribosomal protein uS2 family.

In Karelsulcia muelleri (strain GWSS) (Sulcia muelleri), this protein is Small ribosomal subunit protein uS2.